The primary structure comprises 692 residues: Ino eighty subunit 1 (692 aa).

Positions 1–25 are enriched in basic and acidic residues; it reads MGKRVYDPIHDTFQLREDNSDETKA. The disordered stretch occupies residues 1 to 133; that stretch reads MGKRVYDPIH…RHLKKPDGEP (133 aa). S27 carries the phosphoserine modification. Polar residues predominate over residues 28 to 56; it reads PMQSVKSGSQEEASPSSIQSETETVTTKS. The span at 64-80 shows a compositional bias: acidic residues; sequence EIDDKNDDDSTQSEEEN. A compositionally biased stretch (polar residues) spans 97 to 109; that stretch reads GASTATGPVTTNT. Positions 340–385 form a coiled coil; sequence SKYVEVESKAQEQDMVDEQNEVKETEAENEKQESKAAYATTLFDIL. Basic and acidic residues predominate over residues 465–485; the sequence is FMSKMEEGRKRERTNVTEVKK. The tract at residues 465–550 is disordered; sequence FMSKMEEGRK…VTPAAPTETE (86 aa). 3 positions are modified to phosphoserine: S487, S493, and S504. Positions 493–504 are enriched in acidic residues; that stretch reads SEEDGEGEDDKS. Phosphothreonine is present on T507. Polar residues predominate over residues 513 to 528; the sequence is SLLTPTPILESSSPMT.

Component of the chromatin-remodeling INO80 complex, at least composed of ARP4, ARP5, ARP8, RVB1, RVB2, TAF14, NHP10, IES1, IES3, IES4, IES6, ACT1, IES2, IES5 and INO80.

Its subcellular location is the nucleus. In terms of biological role, probably involved in transcription regulation via its interaction with the INO80 complex, a chromatin-remodeling complex. The chain is Ino eighty subunit 1 (IES1) from Saccharomyces cerevisiae (strain ATCC 204508 / S288c) (Baker's yeast).